Consider the following 431-residue polypeptide: 5-methylthioadenosine/S-adenosylhomocysteine deaminase (431 aa).

Residues His66 and His68 each coordinate Zn(2+). Glu95, Arg147, and His185 together coordinate substrate. His212 is a binding site for Zn(2+). Positions 215 and 300 each coordinate substrate. Asp300 serves as a coordination point for Zn(2+).

The protein belongs to the metallo-dependent hydrolases superfamily. MTA/SAH deaminase family. Requires Zn(2+) as cofactor.

It carries out the reaction S-adenosyl-L-homocysteine + H2O + H(+) = S-inosyl-L-homocysteine + NH4(+). The catalysed reaction is S-methyl-5'-thioadenosine + H2O + H(+) = S-methyl-5'-thioinosine + NH4(+). In terms of biological role, catalyzes the deamination of 5-methylthioadenosine and S-adenosyl-L-homocysteine into 5-methylthioinosine and S-inosyl-L-homocysteine, respectively. Is also able to deaminate adenosine. This Desulfitobacterium hafniense (strain Y51) protein is 5-methylthioadenosine/S-adenosylhomocysteine deaminase.